The chain runs to 1169 residues: Chromosome partition protein Smc (1169 aa).

32 to 39 (PNGCGKSN) contributes to the ATP binding site. 2 coiled-coil regions span residues 170–265 (ISKY…TGEE) and 307–481 (IRHT…ERLN). An SMC hinge domain is found at 525–620 (DRLGEKIEVA…CASDPAEAAE (96 aa)). Coiled-coil stretches lie at residues 656–914 (ALAR…MKLA) and 985–1014 (RYLE…ECRA).

The protein belongs to the SMC family. Homodimer.

The protein localises to the cytoplasm. Required for chromosome condensation and partitioning. In Methylococcus capsulatus (strain ATCC 33009 / NCIMB 11132 / Bath), this protein is Chromosome partition protein Smc.